The following is a 372-amino-acid chain: tRNA-specific 2-thiouridylase MnmA (372 aa).

Residues 11-18 (GMSGGVDS) and methionine 37 contribute to the ATP site. Residues 97-99 (NPD) form an interaction with target base in tRNA region. The active-site Nucleophile is cysteine 102. An intrachain disulfide couples cysteine 102 to cysteine 199. Glycine 126 provides a ligand contact to ATP. The interaction with tRNA stretch occupies residues 149-151 (KDQ). Cysteine 199 acts as the Cysteine persulfide intermediate in catalysis. Positions 309–310 (RY) are interaction with tRNA.

It belongs to the MnmA/TRMU family.

The protein localises to the cytoplasm. It carries out the reaction S-sulfanyl-L-cysteinyl-[protein] + uridine(34) in tRNA + AH2 + ATP = 2-thiouridine(34) in tRNA + L-cysteinyl-[protein] + A + AMP + diphosphate + H(+). Catalyzes the 2-thiolation of uridine at the wobble position (U34) of tRNA, leading to the formation of s(2)U34. This is tRNA-specific 2-thiouridylase MnmA from Staphylococcus aureus (strain bovine RF122 / ET3-1).